A 314-amino-acid polypeptide reads, in one-letter code: Porphobilinogen deaminase (314 aa).

The residue at position 234 (C234) is an S-(dipyrrolylmethanemethyl)cysteine.

The protein belongs to the HMBS family. Monomer. The cofactor is dipyrromethane.

The enzyme catalyses 4 porphobilinogen + H2O = hydroxymethylbilane + 4 NH4(+). It participates in porphyrin-containing compound metabolism; protoporphyrin-IX biosynthesis; coproporphyrinogen-III from 5-aminolevulinate: step 2/4. Its function is as follows. Tetrapolymerization of the monopyrrole PBG into the hydroxymethylbilane pre-uroporphyrinogen in several discrete steps. The chain is Porphobilinogen deaminase from Mycobacterium ulcerans (strain Agy99).